Reading from the N-terminus, the 201-residue chain is Protease (201 aa).

Residues His53, Asp70, and Cys121 contribute to the active site.

The protein belongs to the peptidase C5 family. In terms of assembly, interacts with protease cofactor pVI-C; this interaction is necessary for protease activation.

The protein resides in the virion. It localises to the host nucleus. It catalyses the reaction Cleaves proteins of the adenovirus and its host cell at two consensus sites: -Yaa-Xaa-Gly-Gly-|-Xaa- and -Yaa-Xaa-Gly-Xaa-|-Gly- (in which Yaa is Met, Ile or Leu, and Xaa is any amino acid).. Requires DNA and protease cofactor for maximal activation. Inside nascent virions, becomes partially activated by binding to the viral DNA, allowing it to cleave the cofactor that binds to the protease and fully activates it. Actin, like the viral protease cofactor, seems to act as a cofactor in the cleavage of cytokeratin 18 and of actin itself. Its function is as follows. Cleaves viral precursor proteins (pTP, pIIIa, pVI, pVII, pVIII, and pX) inside newly assembled particles giving rise to mature virions. Protease complexed to its cofactor slides along the viral DNA to specifically locate and cleave the viral precursors. Mature virions have a weakened organization compared to the unmature virions, thereby facilitating subsequent uncoating. Without maturation, the particle lacks infectivity and is unable to uncoat. Late in adenovirus infection, in the cytoplasm, may participate in the cytoskeleton destruction. Cleaves host cell cytoskeletal keratins K7 and K18. The polypeptide is Protease (Equine adenovirus B serotype 2 (EAdV-2)).